A 480-amino-acid chain; its full sequence is Adenylosuccinate lyase (480 aa).

Residues arginine 14, tyrosine 15, arginine 79, histidine 80, and aspartate 81 each coordinate AMP. Histidine 80 is a binding site for fumarate. Histidine 153 serves as the catalytic Proton donor/acceptor. Glutamine 236 serves as a coordination point for AMP. Position 236 (glutamine 236) interacts with fumarate. Residue glutamine 236 participates in N(6)-(1,2-dicarboxyethyl)-AMP binding. The active-site Proton donor/acceptor is serine 284. 3 residues coordinate fumarate: serine 285, lysine 290, and asparagine 292. Positions 285, 290, and 292 each coordinate N(6)-(1,2-dicarboxyethyl)-AMP. Arginine 298 is a binding site for AMP. Residues arginine 324, serine 329, and arginine 333 each coordinate N(6)-(1,2-dicarboxyethyl)-AMP. The AMP site is built by serine 329 and arginine 333.

The protein belongs to the lyase 1 family. Adenylosuccinate lyase subfamily. In terms of assembly, homotetramer.

It catalyses the reaction N(6)-(1,2-dicarboxyethyl)-AMP = fumarate + AMP. Its pathway is purine metabolism; AMP biosynthesis via salvage pathway. Catalyzes conversion of succinyladenosine monophosphate (SAMP) to AMP and fumarate on the purine salvage pathway. This is Adenylosuccinate lyase from Schistosoma mansoni (Blood fluke).